The sequence spans 226 residues: Phosphoribosylformylglycinamidine synthase subunit PurQ (226 aa).

Residues 2–226 (KIAVVVFPGS…LENGRIKVEA (225 aa)) form the Glutamine amidotransferase type-1 domain. Cys86 (nucleophile) is an active-site residue. Active-site residues include His195 and Glu197.

Part of the FGAM synthase complex composed of 1 PurL, 1 PurQ and 2 PurS subunits.

It is found in the cytoplasm. It carries out the reaction N(2)-formyl-N(1)-(5-phospho-beta-D-ribosyl)glycinamide + L-glutamine + ATP + H2O = 2-formamido-N(1)-(5-O-phospho-beta-D-ribosyl)acetamidine + L-glutamate + ADP + phosphate + H(+). It catalyses the reaction L-glutamine + H2O = L-glutamate + NH4(+). The protein operates within purine metabolism; IMP biosynthesis via de novo pathway; 5-amino-1-(5-phospho-D-ribosyl)imidazole from N(2)-formyl-N(1)-(5-phospho-D-ribosyl)glycinamide: step 1/2. Part of the phosphoribosylformylglycinamidine synthase complex involved in the purines biosynthetic pathway. Catalyzes the ATP-dependent conversion of formylglycinamide ribonucleotide (FGAR) and glutamine to yield formylglycinamidine ribonucleotide (FGAM) and glutamate. The FGAM synthase complex is composed of three subunits. PurQ produces an ammonia molecule by converting glutamine to glutamate. PurL transfers the ammonia molecule to FGAR to form FGAM in an ATP-dependent manner. PurS interacts with PurQ and PurL and is thought to assist in the transfer of the ammonia molecule from PurQ to PurL. The chain is Phosphoribosylformylglycinamidine synthase subunit PurQ from Limosilactobacillus reuteri (strain DSM 20016) (Lactobacillus reuteri).